The chain runs to 150 residues: Macrodomain Ter protein (150 aa).

This sequence belongs to the MatP family. As to quaternary structure, homodimer.

It localises to the cytoplasm. Its function is as follows. Required for spatial organization of the terminus region of the chromosome (Ter macrodomain) during the cell cycle. Prevents early segregation of duplicated Ter macrodomains during cell division. Binds specifically to matS, which is a 13 bp signature motif repeated within the Ter macrodomain. The protein is Macrodomain Ter protein of Escherichia coli (strain SMS-3-5 / SECEC).